The sequence spans 760 residues: MENNRNFPARQFHSLTFFAGLCIGITPVAQALAAEGQTNADDTLVVEASTPSLYAPQQSADPKFSRPVADTTRTMTVISEQVIKDQGATNLTDALKNVPGVGAFFAGENGNSTTGDAIYMRGADTSNSIYIDGIRDIGSVSRDTFNTEQVEVIKGPSGTDYGRSAPTGSINMISKQPRNDSGIDASASIGSAWFRRGTLDVNQVIGDTTAVRLNVMGEKTHDAGRDKVKNERYGVAPSIAFGLGTANRLYLNYLHVTQHNTPDGGIPTIGLPGYSAPSAGTATLNHSGKVDTHNFYGTDSDYDDSTTDTATMRFEHDINDNTTIRNTTRWSRVKQDYLMTAIMGGASNITQPTSDVNSWTWSRTANTKDVSNKILTNQTNLTSTFYTASIGHDVSTGVEFTRETQTNYGVNPVTLPAVNIYHPDSSIHPGGLTRNGANANGQTDTFAIYAFDTLQITRDFELNGGIRLDNYHTEYDSATACGGSGRGAITCPAGVAKGSPVTTVDTAKSGNLVNWKAGALYHLTENGNVYINYAVSQQPPGGNNFALAQSGSGNSANRTDFKPQKANTSEIGTKWQVLDKRLLLTAALFRTDIENEVEQNDDGTYSQYGKKRVEGYEISVAGNITPAWQVIGGYTQQKATIKNGKDVAQDGSSSLPYTPEHAFTLWSQYQATDDISVGAGARYIGSMHKGSDGAVGTPAFTEGYWVADAKLGYRVNRNLDFQLNVYNLFDTDYVASINKSGYRYHPGEPRTFLLTANMHF.

Residues 1–31 form the signal peptide; it reads MENNRNFPARQFHSLTFFAGLCIGITPVAQA. The TBDR plug domain maps to 67 to 175; that stretch reads PVADTTRTMT…PTGSINMISK (109 aa). One can recognise a TBDR beta-barrel domain in the interval 180–760; the sequence is DSGIDASASI…TFLLTANMHF (581 aa). The TonB C-terminal box signature appears at 743–760; sequence RYHPGEPRTFLLTANMHF.

The protein belongs to the TonB-dependent receptor family.

It is found in the cell outer membrane. In terms of biological role, involved in the active transport across the outer membrane of iron complexed with catecholate siderophores such as dihydroxybenzoylserine and dihydroxybenzoate. It derives its energy for transport by interacting with the trans-periplasmic membrane protein TonB. Can also transport catechol-substituted cephalosporins. Receptor for microcins M, H47 and E492. The sequence is that of Catecholate siderophore receptor Fiu (fiu) from Escherichia coli O157:H7.